A 153-amino-acid polypeptide reads, in one-letter code: NAD(P)H-quinone oxidoreductase subunit N (153 aa).

The protein belongs to the complex I NdhN subunit family. In terms of assembly, NDH-1 can be composed of about 15 different subunits; different subcomplexes with different compositions have been identified which probably have different functions.

Its subcellular location is the cellular thylakoid membrane. It catalyses the reaction a plastoquinone + NADH + (n+1) H(+)(in) = a plastoquinol + NAD(+) + n H(+)(out). It carries out the reaction a plastoquinone + NADPH + (n+1) H(+)(in) = a plastoquinol + NADP(+) + n H(+)(out). NDH-1 shuttles electrons from an unknown electron donor, via FMN and iron-sulfur (Fe-S) centers, to quinones in the respiratory and/or the photosynthetic chain. The immediate electron acceptor for the enzyme in this species is believed to be plastoquinone. Couples the redox reaction to proton translocation, and thus conserves the redox energy in a proton gradient. Cyanobacterial NDH-1 also plays a role in inorganic carbon-concentration. The sequence is that of NAD(P)H-quinone oxidoreductase subunit N from Prochlorococcus marinus (strain MIT 9313).